The following is a 793-amino-acid chain: MEARVERAVQKRQVLFLCVFLGMSWAGAEPLRYFVAEETERGTFLTNLAKDLGLGVGELRARGTRIVSDQNMQILLLSSLTGDLLLNEKLDREELCGPREPCVLPFQLLLEKPFQIFRAELWVRDINDHAPVFLDREISLKILESTTPGAAFLLESAQDSDVGTNSLSNYTISPNAYFHINVHDSGEGNIYPELVLNQVLDREEIPEFSLTLTALDGGSPPRSGTALVRILVLDVNDNAPDFVRSLYKVQVPENSPVGSMVVSVSARDLDTGSNGEIAYAFSYATERILKTFQINPTSGNLHLKAQLDYEAIQTYTLTIQAKDGGGLSGKCTVVVDVTDINDNRPELLLSSLTSPIAENSPETVVAVFRIRDRDSGNNGKTVCSIQDDLPFILKPSVENFYTLVSEKPLDRERNTEYNITITVTDLGTPRLKTEHNITVLVSDVNDNAPAFTQTSYTLFVRENNSPALPIGSVSATDRDSGTNAQVIYSLLPSQDPHLPLSSLVSINADNGHLFALRSLDYEALQAFEFRVGATDRSSPALSSEALVHVLVLDANDNSPFVLYPLQNSSAPCTEPLPRAAEPGYLVTKVVAVDGDSGQNAWLSYQLLKATEPGLFGVWAHNGEVRTARLLSERDAAKQRLVVLVKDNGEPPRSATATLHVLLVDGFSQPYLRLPEAAPDQANLLTVYLVVALASVSSLFLLSVLLFVAVRLCRRSRAAPVGRCSVPEGPFPRHLVDLSGTGTLSQSYQYEVCLTGGSGTNEFKFLKPIIPNLLPQSTGREVEENRPFQNNLGF.

The N-terminal stretch at 1–26 is a signal peptide; sequence MEARVERAVQKRQVLFLCVFLGMSWA. Residues 27–688 lie on the Extracellular side of the membrane; sequence GAEPLRYFVA…DQANLLTVYL (662 aa). Cadherin domains lie at 35-133, 138-242, 247-347, 352-451, and 456-561; these read VAEE…APVF, ISLK…APDF, YKVQ…RPEL, LTSP…APAF, and YTLF…SPFV. An N-linked (GlcNAc...) asparagine glycan is attached at N169. N-linked (GlcNAc...) asparagine glycans are attached at residues N418 and N436. N567 is a glycosylation site (N-linked (GlcNAc...) asparagine). The Cadherin 6 domain occupies 568–671; sequence SSAPCTEPLP…LVDGFSQPYL (104 aa). A helical transmembrane segment spans residues 689–709; sequence VVALASVSSLFLLSVLLFVAV. At 710–793 the chain is on the cytoplasmic side; it reads RLCRRSRAAP…NRPFQNNLGF (84 aa).

The protein resides in the cell membrane. Its function is as follows. Potential calcium-dependent cell-adhesion protein. May be involved in the establishment and maintenance of specific neuronal connections in the brain. The protein is Protocadherin beta-7 (PCDHB7) of Pan troglodytes (Chimpanzee).